Here is a 126-residue protein sequence, read N- to C-terminus: Small ribosomal subunit protein uS13 (126 aa).

Positions 92 to 126 are disordered; the sequence is HRRGLPANGQRTHTNARTRKGPRKGMLQRRPAATK. Basic residues predominate over residues 105-118; that stretch reads TNARTRKGPRKGML.

Belongs to the universal ribosomal protein uS13 family. As to quaternary structure, part of the 30S ribosomal subunit. Forms a loose heterodimer with protein S19. Forms two bridges to the 50S subunit in the 70S ribosome.

In terms of biological role, located at the top of the head of the 30S subunit, it contacts several helices of the 16S rRNA. In the 70S ribosome it contacts the 23S rRNA (bridge B1a) and protein L5 of the 50S subunit (bridge B1b), connecting the 2 subunits; these bridges are implicated in subunit movement. Contacts the tRNAs in the A and P-sites. This chain is Small ribosomal subunit protein uS13, found in Sorangium cellulosum (strain So ce56) (Polyangium cellulosum (strain So ce56)).